Reading from the N-terminus, the 475-residue chain is MSPQTETKARVGFKAGVKDYRLTYYTPDYQPKDTDILAAFRMTPQPGVPPEEAGAAVAAESSTGTWTTVWTDGLTSLDRYKGRCYDIEPVPGEENQYIAYIAYPLDLFEEGSVTNLFTSIVGNVFGFKALRALRLEDLRIPPAYVKTFQGPPHGIQVERDKLNKYGRGLLGCTIKPKLGLSAKNYGRAVYECLRGGLDFTKDDENVNSQPFMRWRDRFLFVAEAIYKSQAETGEIKGHYLNATAATAEAMMQRAECAKDLGVPIIMHDYLTGGFTANTSLSHYCRDNGLLLHIHRAMHAVIDRQRNHGITFRVLAKALRLSGGDHLHSGTVVGKLEGEREVTLGFVDLMRDDYIEKDRSRGIYFTQDWVSLPGTMPVASGGIHVWHMPALVEIFGDDACLQFGGGTLGHPWGNAPGAAANRVALEACTQARNEGRDLAREGGDVIRAACKWSPELAAACEVWKEIKFEFETIDTL.

Positions 1 to 2 (MS) are excised as a propeptide. P3 carries the N-acetylproline modification. N6,N6,N6-trimethyllysine is present on K14. 2 residues coordinate substrate: N123 and T173. K175 acts as the Proton acceptor in catalysis. K177 is a substrate binding site. Positions 201, 203, and 204 each coordinate Mg(2+). K201 is modified (N6-carboxylysine). H294 acts as the Proton acceptor in catalysis. The substrate site is built by R295, H327, and S379.

Belongs to the RuBisCO large chain family. Type I subfamily. As to quaternary structure, heterohexadecamer of 8 large chains and 8 small chains. Mg(2+) serves as cofactor.

The protein resides in the plastid. The protein localises to the chloroplast. The enzyme catalyses 2 (2R)-3-phosphoglycerate + 2 H(+) = D-ribulose 1,5-bisphosphate + CO2 + H2O. It catalyses the reaction D-ribulose 1,5-bisphosphate + O2 = 2-phosphoglycolate + (2R)-3-phosphoglycerate + 2 H(+). Functionally, ruBisCO catalyzes two reactions: the carboxylation of D-ribulose 1,5-bisphosphate, the primary event in carbon dioxide fixation, as well as the oxidative fragmentation of the pentose substrate in the photorespiration process. Both reactions occur simultaneously and in competition at the same active site. This Chlorella vulgaris (Green alga) protein is Ribulose bisphosphate carboxylase large chain.